We begin with the raw amino-acid sequence, 257 residues long: Aspartate/glutamate leucyltransferase (257 aa).

The protein belongs to the R-transferase family. Bpt subfamily.

The protein localises to the cytoplasm. The catalysed reaction is N-terminal L-glutamyl-[protein] + L-leucyl-tRNA(Leu) = N-terminal L-leucyl-L-glutamyl-[protein] + tRNA(Leu) + H(+). It carries out the reaction N-terminal L-aspartyl-[protein] + L-leucyl-tRNA(Leu) = N-terminal L-leucyl-L-aspartyl-[protein] + tRNA(Leu) + H(+). Functions in the N-end rule pathway of protein degradation where it conjugates Leu from its aminoacyl-tRNA to the N-termini of proteins containing an N-terminal aspartate or glutamate. The sequence is that of Aspartate/glutamate leucyltransferase from Nitrobacter hamburgensis (strain DSM 10229 / NCIMB 13809 / X14).